The chain runs to 10061 residues: MATH and LRR domain-containing protein PFE0570w (10061 aa).

3 disordered regions span residues 166-210 (DMDN…EKKN), 244-471 (NNSD…NDIN), and 1004-1170 (DDQK…DTSF). A compositionally biased stretch (polar residues) spans 169–179 (NNPNNHVSNNG). Residues 193-205 (TSNSIHKNNNTNI) show a composition bias toward low complexity. Residues 270-282 (KKSDNNNDKKNDD) are compositionally biased toward basic and acidic residues. Positions 285-320 (NNNNNNNNNNNNNNNNNDNHVCTSNNQPNTINKQNN) are enriched in low complexity. Polar residues predominate over residues 328–338 (DQNGRTKITPQ). A coiled-coil region spans residues 338 to 366 (QNVNQKEKEIKNVVKEKNNFNREEKDITN). Residues 342-365 (QKEKEIKNVVKEKNNFNREEKDIT) are compositionally biased toward basic and acidic residues. Acidic residues predominate over residues 366–375 (NSDDYDENST). Polar residues-rich tracts occupy residues 376–389 (DESC…TSSE) and 421–437 (VPSN…SAEN). The stretch at 431–469 (NVKSAENCNKEKKKKKKKKKKELNNDNKDNTLNNETMND) forms a coiled coil. The span at 441-451 (EKKKKKKKKKK) shows a compositional bias: basic residues. Low complexity predominate over residues 460 to 471 (NTLNNETMNDIN). Over residues 1025 to 1037 (NEEKPNVNKEGNI) the composition is skewed to basic and acidic residues. The segment covering 1047-1057 (NKNKNNNNNNN) has biased composition (low complexity). Residues 1058 to 1132 (DKNDKNDKND…KKKKNGKEQN (75 aa)) are compositionally biased toward basic and acidic residues. Acidic residues predominate over residues 1133-1165 (EDSTESDDESSVIDDNYIDDDSCDCDSESDSID). An MATH domain is found at 1328 to 1458 (NGKIELYIPN…SGGLLIKGKV (131 aa)). Residues 1651–1698 (GGNLQNEQKGDEDVKKEDVKKENVNKEEIKNGNNNNNNDENENEVDDN) are disordered. Residues 1658–1680 (QKGDEDVKKEDVKKENVNKEEIK) are compositionally biased toward basic and acidic residues. Positions 1916 to 1948 (NYLSNLNKVKININDLNNNIVDVNNSIHNIEKE) form a coiled coil. Basic and acidic residues predominate over residues 1973 to 1995 (HKETSSIQNKGKEKSNNNIKSDD). 4 disordered regions span residues 1973-1998 (HKET…DNNN), 2155-2245 (LNKS…PSYK), 2427-2566 (YSDD…NNIK), and 3120-3139 (SNET…NEMK). Residues 2216–2228 (NNDDKDDDDDDSY) are compositionally biased toward acidic residues. Residues 2235 to 2245 (SDGKKNDPSYK) are compositionally biased toward basic and acidic residues. Over residues 2475-2484 (NNNNNNNNMM) the composition is skewed to low complexity. Basic and acidic residues-rich tracts occupy residues 2487-2496 (DDNKVNKNEE) and 2505-2527 (QIKE…RNED). 2 stretches are compositionally biased toward low complexity: residues 2552 to 2564 (NNNN…NNNN) and 3121 to 3133 (NETN…NRTN). Positions 2555–2580 (NNNNNNNNNNIKRLDDSYNKLLKNKN) form a coiled coil. Residues 3398-3418 (KLILKKIFMYLNIICMIIKYI) traverse the membrane as a helical segment. Disordered regions lie at residues 3802–3826 (STND…YSKK), 3847–3890 (LTSG…DNNN), and 3919–3953 (ESND…EKKS). The segment covering 3809–3822 (VDRSDDSESNDDKK) has biased composition (basic and acidic residues). Residues 3851-3890 (NSSSKNSKKNSNNESIQMDNTNNSNSNNNNKNDNNNDNNN) show a composition bias toward low complexity. Residues 3926 to 3941 (KNQNIQSNEQSVTPNR) are compositionally biased toward polar residues. Positions 3942-3953 (NIEENKDHEKKS) are enriched in basic and acidic residues. A coiled-coil region spans residues 3977 to 4001 (EHLGNATAVLNILQKKLENEELKKL). A compositionally biased stretch (basic and acidic residues) spans 4039–4065 (VSAHKEKNVKTDSSDDKKKKEDNENNN). Disordered regions lie at residues 4039–4074 (VSAH…IIHN), 4155–4180 (KGNN…NNMG), 4352–4414 (SNNN…NNNN), 4919–4943 (NKRK…DNDN), 4991–5030 (DGLN…KNEK), and 5179–5207 (SKIA…KSNL). The segment covering 4157–4178 (NNSKDNNNNNNNNNNNNNNKNN) has biased composition (low complexity). The stretch at 4399–4424 (NNNNNNNNNNNNNNNNVNKEIIKLNS) forms a coiled coil. 3 stretches are compositionally biased toward low complexity: residues 4929-4943 (NNNN…DNDN), 5004-5019 (NMNN…NNSN), and 5185-5202 (NGNN…NNNN). Residues 5006 to 5046 (NNVKNKNNNNNNSNNKRKKNEKNEKIDKIEQFLHESELEKD) are a coiled coil. Coiled-coil stretches lie at residues 5486 to 5563 (NNNN…NIYE), 5728 to 5810 (DVLK…DKEE), and 5900 to 6022 (MNND…INNY). Composition is skewed to basic and acidic residues over residues 5716–5732 (KDAK…VLKD), 5738–5811 (SNKE…KEEP), and 5909–5953 (NKNK…KKDN). Disordered regions lie at residues 5716–5816 (KDAK…QINE), 5892–6009 (EIIN…KKLK), 6123–6142 (KSET…VDGK), 6299–6338 (NDSI…DKGE), 6722–6760 (NMNN…NNNI), 7585–7730 (EDML…VEEK), and 7744–7787 (DLLS…KKSS). Positions 5954–5968 (NNSNNNNNNNNLSNN) are enriched in low complexity. A compositionally biased stretch (acidic residues) spans 5969–5978 (GEEDPNDSDS). The segment covering 5991 to 6003 (NKNINDDSDDNNK) has biased composition (basic and acidic residues). Polar residues predominate over residues 6129 to 6138 (SNKNVESNDN). Composition is skewed to low complexity over residues 6314–6333 (SNSN…NNNN) and 6722–6759 (NMNN…NNNN). Positions 6719-6743 (NMNNMNNNNNNNNNNNNNNNNNNNN) form a coiled coil. Residues 7585-7599 (EDMLHSKKTDVIQHG) are compositionally biased toward basic and acidic residues. A compositionally biased stretch (acidic residues) spans 7600–7685 (DEEEDDEEDD…EHINEEEQED (86 aa)). Coiled coils occupy residues 7601–7637 (EEED…DIED), 7710–7813 (NTKI…NKNE), 7934–7961 (KTDE…IDNE), and 8217–8241 (NINN…GKRE). The span at 7749–7765 (SKKKNHKDKRNASKNKN) shows a compositional bias: basic residues. The span at 7766-7786 (KNKDILKKNENNINDEKEKKS) shows a compositional bias: basic and acidic residues. Disordered stretches follow at residues 8189–8252 (ETGG…GGEE), 8293–8380 (GKVS…IIMS), and 8474–8497 (KKKN…MDEE). Residues 8218 to 8242 (INNKEKETNKNEEQQQGEAEGKREG) show a composition bias toward basic and acidic residues. Acidic residues predominate over residues 8243 to 8252 (EGEEGEGGEE). Positions 8305–8314 (LLNDKEHEKD) are enriched in basic and acidic residues. The span at 8315–8363 (NEDNDEDNDEDDDDEDDDEDDEDDDDDDDDDDDDDDDDDYDEDYDEDYD) shows a compositional bias: acidic residues. Over residues 8364 to 8374 (EKLVENKKNER) the composition is skewed to basic and acidic residues. Residues 8478–8492 (YSNNNIYNNNSSNKV) are compositionally biased toward low complexity. Coiled-coil stretches lie at residues 8644–8697 (SETL…ELNN), 8882–8907 (QYLE…VDNY), and 9219–9247 (IDMK…SNNN). Disordered stretches follow at residues 9759 to 9779 (TIPR…NNNS), 9891 to 9926 (SNTS…SSSN), and 9985 to 10061 (KNNS…NNIY). Low complexity-rich tracts occupy residues 9764 to 9779 (NTTT…NNNS), 9899 to 9926 (NSSN…SSSN), and 9986 to 10022 (NNSI…NNNT). The segment covering 10031 to 10041 (IFQQNQNHSDT) has biased composition (polar residues). A compositionally biased stretch (low complexity) spans 10042 to 10061 (NNNNNNNNKNNSNNNNNNIY).

Its subcellular location is the membrane. The protein is MATH and LRR domain-containing protein PFE0570w of Plasmodium falciparum (isolate 3D7).